Consider the following 244-residue polypeptide: DNA repair protein RecO (244 aa).

The protein belongs to the RecO family.

Involved in DNA repair and RecF pathway recombination. The chain is DNA repair protein RecO from Myxococcus xanthus (strain DK1622).